Reading from the N-terminus, the 342-residue chain is Dihydroorotase (342 aa).

His13 and His15 together coordinate Zn(2+). Substrate is bound by residues His15 to Arg17 and Asn41. Zn(2+) is bound by residues Lys97, His134, and His172. Lys97 bears the N6-carboxylysine mark. His134 contacts substrate. Position 217 (Leu217) interacts with substrate. A Zn(2+)-binding site is contributed by Asp245. The active site involves Asp245. Residues His249 and Ala261 each coordinate substrate.

The protein belongs to the metallo-dependent hydrolases superfamily. DHOase family. Class II DHOase subfamily. As to quaternary structure, homodimer. Zn(2+) is required as a cofactor.

It carries out the reaction (S)-dihydroorotate + H2O = N-carbamoyl-L-aspartate + H(+). It functions in the pathway pyrimidine metabolism; UMP biosynthesis via de novo pathway; (S)-dihydroorotate from bicarbonate: step 3/3. Catalyzes the reversible cyclization of carbamoyl aspartate to dihydroorotate. The protein is Dihydroorotase of Shewanella loihica (strain ATCC BAA-1088 / PV-4).